Reading from the N-terminus, the 360-residue chain is Peptide chain release factor 1 (360 aa).

The residue at position 235 (glutamine 235) is an N5-methylglutamine. A compositionally biased stretch (basic and acidic residues) spans 285–295 (RQAAEQTDMRR). The segment at 285 to 309 (RQAAEQTDMRRNLLGSGDRSDKIRT) is disordered.

The protein belongs to the prokaryotic/mitochondrial release factor family. Methylated by PrmC. Methylation increases the termination efficiency of RF1.

It localises to the cytoplasm. In terms of biological role, peptide chain release factor 1 directs the termination of translation in response to the peptide chain termination codons UAG and UAA. The chain is Peptide chain release factor 1 from Haemophilus influenzae (strain 86-028NP).